Here is a 1227-residue protein sequence, read N- to C-terminus: DNA-directed RNA polymerase subunit beta' (1227 aa).

Residues C60, C62, C75, and C78 each contribute to the Zn(2+) site. The Mg(2+) site is built by D449, D451, and D453. Positions 847, 921, 928, and 931 each coordinate Zn(2+).

It belongs to the RNA polymerase beta' chain family. In terms of assembly, the RNAP catalytic core consists of 2 alpha, 1 beta, 1 beta' and 1 omega subunit. When a sigma factor is associated with the core the holoenzyme is formed, which can initiate transcription. Mg(2+) is required as a cofactor. Requires Zn(2+) as cofactor.

The catalysed reaction is RNA(n) + a ribonucleoside 5'-triphosphate = RNA(n+1) + diphosphate. Functionally, DNA-dependent RNA polymerase catalyzes the transcription of DNA into RNA using the four ribonucleoside triphosphates as substrates. In Lysinibacillus sphaericus (strain C3-41), this protein is DNA-directed RNA polymerase subunit beta'.